Consider the following 343-residue polypeptide: RNA 3'-terminal phosphate cyclase (343 aa).

ATP is bound by residues Gln102 and 284–288 (FLGDQ). Residue His308 is the Tele-AMP-histidine intermediate of the active site.

The protein belongs to the RNA 3'-terminal cyclase family. Type 1 subfamily.

Its subcellular location is the cytoplasm. It carries out the reaction a 3'-end 3'-phospho-ribonucleotide-RNA + ATP = a 3'-end 2',3'-cyclophospho-ribonucleotide-RNA + AMP + diphosphate. Catalyzes the conversion of 3'-phosphate to a 2',3'-cyclic phosphodiester at the end of RNA. The mechanism of action of the enzyme occurs in 3 steps: (A) adenylation of the enzyme by ATP; (B) transfer of adenylate to an RNA-N3'P to produce RNA-N3'PP5'A; (C) and attack of the adjacent 2'-hydroxyl on the 3'-phosphorus in the diester linkage to produce the cyclic end product. The biological role of this enzyme is unknown but it is likely to function in some aspects of cellular RNA processing. The polypeptide is RNA 3'-terminal phosphate cyclase (rtcA) (Thermococcus kodakarensis (strain ATCC BAA-918 / JCM 12380 / KOD1) (Pyrococcus kodakaraensis (strain KOD1))).